A 491-amino-acid polypeptide reads, in one-letter code: Phosphatidylglycerol--prolipoprotein diacylglyceryl transferase (491 aa).

3 helical membrane passes run 24-44, 58-78, and 98-118; these read IPLR…IWWG, VLDV…AYHV, and IWQG…GAWI. Arg-146 provides a ligand contact to a 1,2-diacyl-sn-glycero-3-phospho-(1'-sn-glycerol). The next 2 membrane-spanning stretches (helical) occupy residues 192 to 212 and 256 to 276; these read IVHP…IALV and INNF…VFAT. Residues 309-323 are compositionally biased toward low complexity; the sequence is NGPAEPGATASTATD. Residues 309–491 form a disordered region; it reads NGPAEPGATA…DRVDSGENDA (183 aa). Over residues 347 to 360 the composition is skewed to basic and acidic residues; sequence KGDRGTADAADTAK. Low complexity-rich tracts occupy residues 361–387, 394–406, and 415–438; these read DASA…GSSD, AVKA…AAEK, and AGEA…SAKS. Positions 453–462 are enriched in basic and acidic residues; the sequence is NESESTRDNE. Over residues 463–481 the composition is skewed to low complexity; the sequence is STSAGTAASATGSAGAGAT. Over residues 482 to 491 the composition is skewed to basic and acidic residues; the sequence is DRVDSGENDA.

This sequence belongs to the Lgt family.

It localises to the cell membrane. The enzyme catalyses L-cysteinyl-[prolipoprotein] + a 1,2-diacyl-sn-glycero-3-phospho-(1'-sn-glycerol) = an S-1,2-diacyl-sn-glyceryl-L-cysteinyl-[prolipoprotein] + sn-glycerol 1-phosphate + H(+). It participates in protein modification; lipoprotein biosynthesis (diacylglyceryl transfer). In terms of biological role, catalyzes the transfer of the diacylglyceryl group from phosphatidylglycerol to the sulfhydryl group of the N-terminal cysteine of a prolipoprotein, the first step in the formation of mature lipoproteins. This is Phosphatidylglycerol--prolipoprotein diacylglyceryl transferase from Nocardia farcinica (strain IFM 10152).